The sequence spans 529 residues: Glucose-6-phosphate isomerase (529 aa).

The active-site Proton donor is the E323. Active-site residues include H352 and K456.

The protein belongs to the GPI family.

Its subcellular location is the cytoplasm. The enzyme catalyses alpha-D-glucose 6-phosphate = beta-D-fructose 6-phosphate. The protein operates within carbohydrate biosynthesis; gluconeogenesis. It functions in the pathway carbohydrate degradation; glycolysis; D-glyceraldehyde 3-phosphate and glycerone phosphate from D-glucose: step 2/4. Functionally, catalyzes the reversible isomerization of glucose-6-phosphate to fructose-6-phosphate. The chain is Glucose-6-phosphate isomerase from Geobacter sulfurreducens (strain ATCC 51573 / DSM 12127 / PCA).